The following is a 317-amino-acid chain: Probable GTP 3',8-cyclase (317 aa).

One can recognise a Radical SAM core domain in the interval 4–223 (RYGRPLEDLR…KSEIREKHFR (220 aa)). Arg-13 contacts GTP. [4Fe-4S] cluster-binding residues include Cys-20, Cys-24, and Cys-27. Lys-61 contributes to the GTP binding site. S-adenosyl-L-methionine is bound at residue Gly-65. Position 91 (Thr-91) interacts with GTP. Ser-115 contributes to the S-adenosyl-L-methionine binding site. GTP is bound at residue Lys-152. The [4Fe-4S] cluster site is built by Cys-246 and Cys-249. Position 251–253 (251–253 (RVR)) interacts with GTP. Cys-263 contacts [4Fe-4S] cluster.

This sequence belongs to the radical SAM superfamily. MoaA family. Requires [4Fe-4S] cluster as cofactor.

The enzyme catalyses GTP + AH2 + S-adenosyl-L-methionine = (8S)-3',8-cyclo-7,8-dihydroguanosine 5'-triphosphate + 5'-deoxyadenosine + L-methionine + A + H(+). The protein operates within cofactor biosynthesis; molybdopterin biosynthesis. Functionally, catalyzes the cyclization of GTP to (8S)-3',8-cyclo-7,8-dihydroguanosine 5'-triphosphate. The sequence is that of Probable GTP 3',8-cyclase from Metallosphaera sedula (strain ATCC 51363 / DSM 5348 / JCM 9185 / NBRC 15509 / TH2).